A 357-amino-acid polypeptide reads, in one-letter code: MVNAPIKLLIAASGTGGHLFPAIALAEKLPDYEIEWLGVPNRLETQLVPKQYPLNTIAVEGFQQGLGLSSLVILGKLIGSILKVRRLLKQGNFQGVVTTGGYIAGPAVIAARSLGLPVIFHESNALPGKVTRFFGPWCSVVALGFDVAAKYLPRATNVCVGTPVRSQFLNLSNNSQLDLAIPGGVPVIVVFGGSQGAVAVNQLVRQAAPAWFEAGAYVVHLTGDRDPDVDSLKHPQYIELPFYDNMAALLQRASLAISRSGAGSLTELAVCGTPAILIPYPFAAEDHQSYNAEVFTKAGAALSFKQSALTAELLQNQVLNLLQSPPELAKMGENAKAIAVPDSADKLAVLVREVVER.

Residues 15 to 17 (TGG), asparagine 124, arginine 165, serine 194, and glutamine 288 each bind UDP-N-acetyl-alpha-D-glucosamine.

This sequence belongs to the glycosyltransferase 28 family. MurG subfamily.

The protein localises to the cell inner membrane. The catalysed reaction is di-trans,octa-cis-undecaprenyl diphospho-N-acetyl-alpha-D-muramoyl-L-alanyl-D-glutamyl-meso-2,6-diaminopimeloyl-D-alanyl-D-alanine + UDP-N-acetyl-alpha-D-glucosamine = di-trans,octa-cis-undecaprenyl diphospho-[N-acetyl-alpha-D-glucosaminyl-(1-&gt;4)]-N-acetyl-alpha-D-muramoyl-L-alanyl-D-glutamyl-meso-2,6-diaminopimeloyl-D-alanyl-D-alanine + UDP + H(+). Its pathway is cell wall biogenesis; peptidoglycan biosynthesis. Its function is as follows. Cell wall formation. Catalyzes the transfer of a GlcNAc subunit on undecaprenyl-pyrophosphoryl-MurNAc-pentapeptide (lipid intermediate I) to form undecaprenyl-pyrophosphoryl-MurNAc-(pentapeptide)GlcNAc (lipid intermediate II). In Trichormus variabilis (strain ATCC 29413 / PCC 7937) (Anabaena variabilis), this protein is UDP-N-acetylglucosamine--N-acetylmuramyl-(pentapeptide) pyrophosphoryl-undecaprenol N-acetylglucosamine transferase.